The chain runs to 910 residues: DNA mismatch repair protein MutS (910 aa).

607–614 (GPNMAGKS) is an ATP binding site.

This sequence belongs to the DNA mismatch repair MutS family.

This protein is involved in the repair of mismatches in DNA. It is possible that it carries out the mismatch recognition step. This protein has a weak ATPase activity. The sequence is that of DNA mismatch repair protein MutS from Geobacillus thermodenitrificans (strain NG80-2).